The primary structure comprises 361 residues: S-adenosylmethionine:tRNA ribosyltransferase-isomerase (361 aa).

Belongs to the QueA family. Monomer.

It is found in the cytoplasm. It carries out the reaction 7-aminomethyl-7-carbaguanosine(34) in tRNA + S-adenosyl-L-methionine = epoxyqueuosine(34) in tRNA + adenine + L-methionine + 2 H(+). It functions in the pathway tRNA modification; tRNA-queuosine biosynthesis. Its function is as follows. Transfers and isomerizes the ribose moiety from AdoMet to the 7-aminomethyl group of 7-deazaguanine (preQ1-tRNA) to give epoxyqueuosine (oQ-tRNA). The polypeptide is S-adenosylmethionine:tRNA ribosyltransferase-isomerase (Actinobacillus pleuropneumoniae serotype 5b (strain L20)).